The following is a 106-amino-acid chain: MANLNDWLNLEPLAEDQTRRAVKPPSLYSVILNNDDYTPMEFVIEVLQTFFAYDIERATQLMLTVHYKGKAVCGVFTAEVAETKVALINRYARDNEHPLLCTLEKA.

The protein belongs to the ClpS family. In terms of assembly, binds to the N-terminal domain of the chaperone ClpA.

In terms of biological role, involved in the modulation of the specificity of the ClpAP-mediated ATP-dependent protein degradation. This Edwardsiella ictaluri (strain 93-146) protein is ATP-dependent Clp protease adapter protein ClpS.